Here is a 289-residue protein sequence, read N- to C-terminus: Protease HtpX homolog (289 aa).

2 consecutive transmembrane segments (helical) span residues 11–31 (AALF…IGAG) and 36–54 (APIW…YGYW). Histidine 138 is a Zn(2+) binding site. Glutamate 139 is an active-site residue. Histidine 142 contacts Zn(2+). Transmembrane regions (helical) follow at residues 153-173 (VAAA…FFGG) and 182-202 (LAMI…QMAI). Glutamate 207 serves as a coordination point for Zn(2+).

This sequence belongs to the peptidase M48B family. Requires Zn(2+) as cofactor.

It localises to the cell membrane. The polypeptide is Protease HtpX homolog (Pseudarthrobacter chlorophenolicus (strain ATCC 700700 / DSM 12829 / CIP 107037 / JCM 12360 / KCTC 9906 / NCIMB 13794 / A6) (Arthrobacter chlorophenolicus)).